Reading from the N-terminus, the 331-residue chain is 6-phosphogluconolactonase (331 aa).

K287 is subject to N6-acetyllysine.

This sequence belongs to the cycloisomerase 2 family.

The catalysed reaction is 6-phospho-D-glucono-1,5-lactone + H2O = 6-phospho-D-gluconate + H(+). Its pathway is carbohydrate degradation; pentose phosphate pathway; D-ribulose 5-phosphate from D-glucose 6-phosphate (oxidative stage): step 2/3. In terms of biological role, catalyzes the hydrolysis of 6-phosphogluconolactone to 6-phosphogluconate. The protein is 6-phosphogluconolactonase of Shigella flexneri.